Reading from the N-terminus, the 59-residue chain is UPF0434 protein PBPRA2383 (59 aa).

This sequence belongs to the UPF0434 family.

The protein is UPF0434 protein PBPRA2383 of Photobacterium profundum (strain SS9).